The chain runs to 55 residues: Small ribosomal subunit protein uS14 (55 aa).

Residues 1-20 (MSFEPSGPHSHRKPFGKGSR) form a disordered region. Zn(2+)-binding residues include Cys-22, Cys-25, Cys-38, and Cys-41.

The protein belongs to the universal ribosomal protein uS14 family. Zn(2+) is required as a cofactor.

In Encephalitozoon cuniculi (strain GB-M1) (Microsporidian parasite), this protein is Small ribosomal subunit protein uS14 (RPS29).